The primary structure comprises 481 residues: MTNNKLLFKKDVNGPWSLPIIGGIYLINDNPNRALTKLSKKYGGIYKIWLGESFSMVVSDPEIVNEIWVKQHDNFINRPKNITHKMFSSNYRSLNFGDNPNWKFNRSMASSHFTKTKLLSSKVTSVVEKKLNKLIETMEYHSINKLPFDSYVGFSEYSLNIILNMLVSMDIDECENSTQNVIYSINEIFKMLSTNSPQYSFPYLKFFFKKDLNNFKFHLDKIKSFIHSIYLKQLESYDPSNPRNILDSFISDLQSNDIDILLQICIDIVVAGTDTVANLLQWFVLFCINYPEIQEKLYNEIIEVVGKDCKVLKYEHISKMPYLYGCFRESLRIRPVTPLSLPRVAKCDTYIKDDIFIPKGATIIQNIFGMGNDEKYISEPNKFKPERWVEYIKNKKVNKNGNENSVNKYFNDLDKISIPFGVGKRQCLSPAMAEQESLLSIATVVLNYKLKSNGQKKLNEKEVYSITIKPQPFKLFLEKRV.

Residue cysteine 427 coordinates heme.

This sequence belongs to the cytochrome P450 family. Heme serves as cofactor.

This is Putative cytochrome P450 520B1 (cyp520B1) from Dictyostelium discoideum (Social amoeba).